The primary structure comprises 157 residues: MSRRNRAPKRDILPDPKYKSQVVAKFVNHIMLSGKKSIAEKIVYGAFDKIKAKDASANEVEVFEKALESVSPMVEVKSRRVGGATYQVPVEVRPERRQTLGMRWIIDAARKRKENTMGDRVAAEILEAVEGRGAAVKKREDTHKMAEANKAFAHFRW.

The protein belongs to the universal ribosomal protein uS7 family. Part of the 30S ribosomal subunit. Contacts proteins S9 and S11.

One of the primary rRNA binding proteins, it binds directly to 16S rRNA where it nucleates assembly of the head domain of the 30S subunit. Is located at the subunit interface close to the decoding center, probably blocks exit of the E-site tRNA. The chain is Small ribosomal subunit protein uS7 from Francisella tularensis subsp. tularensis (strain FSC 198).